A 545-amino-acid polypeptide reads, in one-letter code: Glucose-6-phosphate isomerase (545 aa).

Glu351 acts as the Proton donor in catalysis. Residues His382 and Lys510 contribute to the active site.

The protein belongs to the GPI family.

It localises to the cytoplasm. The catalysed reaction is alpha-D-glucose 6-phosphate = beta-D-fructose 6-phosphate. The protein operates within carbohydrate biosynthesis; gluconeogenesis. Its pathway is carbohydrate degradation; glycolysis; D-glyceraldehyde 3-phosphate and glycerone phosphate from D-glucose: step 2/4. Catalyzes the reversible isomerization of glucose-6-phosphate to fructose-6-phosphate. The polypeptide is Glucose-6-phosphate isomerase (Shewanella sediminis (strain HAW-EB3)).